A 951-amino-acid polypeptide reads, in one-letter code: 5'-3' exoribonuclease 2 (951 aa).

The CCHC-type zinc-finger motif lies at 262–278; that stretch reads PCALCNQFGHEVKDCEG. Lys-286 bears the N6-acetyllysine mark. The segment at 408–508 is disordered; that stretch reads KDDEDSFRRR…SDSEPEPEDN (101 aa). Over residues 416–426 the composition is skewed to basic residues; it reads RRQKEKRKRMK. Residue Thr-439 is modified to Phosphothreonine. 2 stretches are compositionally biased toward polar residues: residues 445–458 and 467–485; these read SRNSPGCQVASNPR and QRNSSPSISPNTSFASDGS. Ser-448, Ser-471, Ser-473, Ser-475, Ser-482, Ser-487, Ser-499, Ser-501, and Ser-678 each carry phosphoserine. 3 positions are modified to asymmetric dimethylarginine; alternate: Arg-824, Arg-847, and Arg-851. An omega-N-methylarginine; alternate mark is found at Arg-824, Arg-847, and Arg-851. Arg-880 carries the asymmetric dimethylarginine modification. Arg-883 is subject to Asymmetric dimethylarginine; alternate. The residue at position 883 (Arg-883) is an Omega-N-methylarginine; alternate. At Arg-895 the chain carries Omega-N-methylarginine. Residues 907–951 are disordered; the sequence is NQYQMLGGPGGYPPRRDDHRGGRQGYPREGRKYPLPPPSGRYSWN. A compositionally biased stretch (basic and acidic residues) spans 920–938; it reads PRRDDHRGGRQGYPREGRK. Position 947 is an asymmetric dimethylarginine; alternate (Arg-947). Position 947 is an omega-N-methylarginine; alternate (Arg-947).

The protein belongs to the 5'-3' exonuclease family. XRN2/RAT1 subfamily. Interacts with POLR2A and SMN1/SMN2. Interacts with CDKN2AIP and NKRF. Interacts with CDKN2AIPNL; the interaction is direct. Interacts with TRIM71 (via NHL repeats) in an RNA-dependent manner. Interacts with DHX34; the interaction is RNA-independent. Expressed in the spleen, testis, heart, brain, lung, liver, skeletal muscle, and kidney.

The protein localises to the nucleus. It localises to the nucleolus. Its function is as follows. Possesses 5'-&gt;3' exoribonuclease activity. May promote the termination of transcription by RNA polymerase II. During transcription termination, cleavage at the polyadenylation site liberates a 5' fragment which is subsequently processed to form the mature mRNA and a 3' fragment which remains attached to the elongating polymerase. The processive degradation of this 3' fragment by this protein may promote termination of transcription. Binds to RNA polymerase II (RNAp II) transcription termination R-loops formed by G-rich pause sites. The protein is 5'-3' exoribonuclease 2 (Xrn2) of Mus musculus (Mouse).